Here is a 55-residue protein sequence, read N- to C-terminus: Large ribosomal subunit protein bL33 (55 aa).

This sequence belongs to the bacterial ribosomal protein bL33 family.

The protein is Large ribosomal subunit protein bL33 of Yersinia enterocolitica serotype O:8 / biotype 1B (strain NCTC 13174 / 8081).